Consider the following 418-residue polypeptide: Putative competence-damage inducible protein (418 aa).

It belongs to the CinA family.

In Streptococcus gordonii (strain Challis / ATCC 35105 / BCRC 15272 / CH1 / DL1 / V288), this protein is Putative competence-damage inducible protein.